We begin with the raw amino-acid sequence, 795 residues long: Protein translocase subunit SecA 2 (795 aa).

Residues Gln84, 102-106, and Asp496 contribute to the ATP site; that span reads GEGKT.

This sequence belongs to the SecA family. As to quaternary structure, monomer and homodimer. Part of the essential Sec protein translocation apparatus which comprises SecA, SecYEG and auxiliary proteins SecDF. Other proteins may also be involved.

Its subcellular location is the cell membrane. It is found in the cytoplasm. It carries out the reaction ATP + H2O + cellular proteinSide 1 = ADP + phosphate + cellular proteinSide 2.. Its function is as follows. Part of the Sec protein translocase complex. Interacts with the SecYEG preprotein conducting channel. Has a central role in coupling the hydrolysis of ATP to the transfer of proteins into and across the cell membrane, serving as an ATP-driven molecular motor driving the stepwise translocation of polypeptide chains across the membrane. This Streptococcus agalactiae serotype III (strain NEM316) protein is Protein translocase subunit SecA 2.